We begin with the raw amino-acid sequence, 578 residues long: SCARECROW-LIKE protein 7 (578 aa).

Residues valine 18 to glutamine 29 show a composition bias toward low complexity. Disordered stretches follow at residues valine 18–glycine 84 and proline 146–proline 173. Positions proline 49 to glutamine 61 are enriched in basic residues. Residues glutamine 62–histidine 74 show a composition bias toward low complexity. Residues proline 146–threonine 156 show a composition bias toward pro residues. The segment covering histidine 157–proline 173 has biased composition (low complexity). Positions serine 198–arginine 578 constitute a GRAS domain. The segment at alanine 205–alanine 264 is leucine repeat I (LRI). Positions tyrosine 283–glycine 349 are VHIID. The short motif at isoleucine 314–aspartate 318 is the VHIID element. The interval alanine 365 to aspartate 397 is leucine repeat II (LRII). The tract at residues valine 406 to arginine 497 is PFYRE. The LXXLL motif motif lies at leucine 414–leucine 418. The interval glycine 500 to arginine 578 is SAW.

This sequence belongs to the GRAS family. In terms of assembly, homodimer.

It is found in the nucleus. Its function is as follows. Probable transcription factor involved in plant development. Involved in environmental abiotic stress resistance. May increase the expression of stress-responsive genes. Binds DNA in vitro. The chain is SCARECROW-LIKE protein 7 from Oryza sativa subsp. japonica (Rice).